Reading from the N-terminus, the 70-residue chain is Large ribosomal subunit protein eL38 (70 aa).

This sequence belongs to the eukaryotic ribosomal protein eL38 family.

In Lonomia obliqua (Moth), this protein is Large ribosomal subunit protein eL38 (RpL38).